A 282-amino-acid chain; its full sequence is MHAENSFVIDDWYPVGALAETVSGRKYHTRILGTEIWYQLADGTVSAGLADNTAELASKSIYGLLWVSLSDNPRDVIAIPEFAEADRRVVSAGSIRVATSGLRVIENFLDMAHFPFVHTDILGAEPLTEVAAYDVEIDEAADEIRAVNCRFPQPKGSAAASEPVEMQYVYRIARPFIAILYKTCVIDANRLDVLGLFVQPVDQESSIAHTIMCYLDDINTDKQLRDFQQRIFGQDIMILINQVPKALPLNPRHETPVRADALSSAYRRWLNDRNVTFGTTRG.

The enzyme catalyses 7-methylxanthine + NADPH + O2 + H(+) = xanthine + formaldehyde + NADP(+) + H2O. It catalyses the reaction 7-methylxanthine + NADH + O2 + H(+) = xanthine + formaldehyde + NAD(+) + H2O. Functionally, involved in the caffeine degradation, which is the essential first step for assimilating the carbon and nitrogen in caffeine. Probably catalyzes the N7-demethylation of 7-methylxanthine to produce xanthine and formaldehyde. This is Probable methylxanthine N7-demethylase NdmC from Pseudomonas sp. (strain TJI-51).